The following is a 555-amino-acid chain: Urocanate hydratase (555 aa).

Residues 51–52 (GG), glutamine 129, 175–177 (GMG), glutamate 195, 241–242 (NA), 262–266 (QTSAH), 272–273 (YL), and tyrosine 321 each bind NAD(+). Cysteine 409 is an active-site residue. Glycine 491 serves as a coordination point for NAD(+).

The protein belongs to the urocanase family. The cofactor is NAD(+).

The protein resides in the cytoplasm. The catalysed reaction is 4-imidazolone-5-propanoate = trans-urocanate + H2O. It participates in amino-acid degradation; L-histidine degradation into L-glutamate; N-formimidoyl-L-glutamate from L-histidine: step 2/3. In terms of biological role, catalyzes the conversion of urocanate to 4-imidazolone-5-propionate. This chain is Urocanate hydratase, found in Hyphomonas neptunium (strain ATCC 15444).